Reading from the N-terminus, the 1345-residue chain is Mediator of RNA polymerase II transcription subunit 13 (1345 aa).

2 disordered regions span residues 363-387 and 402-537; these read KSQT…SPYP and FMAS…AESG. The segment covering 364–375 has biased composition (low complexity); it reads SQTNQQQTSSNS. Over residues 406–415 the composition is skewed to polar residues; it reads PSVSGNSNEL. Residues 469 to 482 are compositionally biased toward acidic residues; it reads LFGEEDEDEDDADL. The segment covering 486–501 has biased composition (polar residues); that stretch reads SNNDSTGESNANNSKG.

This sequence belongs to the Mediator complex subunit 13 family. In terms of assembly, component of the SRB8-11 complex, which itself associates with the Mediator complex.

It localises to the nucleus. Component of the SRB8-11 complex. The SRB8-11 complex is a regulatory module of the Mediator complex which is itself involved in regulation of basal and activated RNA polymerase II-dependent transcription. The SRB8-11 complex may be involved in the transcriptional repression of a subset of genes regulated by Mediator. It may inhibit the association of the Mediator complex with RNA polymerase II to form the holoenzyme complex. The chain is Mediator of RNA polymerase II transcription subunit 13 (SSN2) from Candida glabrata (strain ATCC 2001 / BCRC 20586 / JCM 3761 / NBRC 0622 / NRRL Y-65 / CBS 138) (Yeast).